The following is a 284-amino-acid chain: Nucleotide-binding protein NMCC_0698 (284 aa).

ATP is bound at residue 8–15 (GLSGSGKS). 58–61 (DVRS) is a binding site for GTP.

This sequence belongs to the RapZ-like family.

Displays ATPase and GTPase activities. The protein is Nucleotide-binding protein NMCC_0698 of Neisseria meningitidis serogroup C (strain 053442).